A 502-amino-acid chain; its full sequence is NAD(P)H-quinone oxidoreductase chain 4, chloroplastic (502 aa).

A run of 14 helical transmembrane segments spans residues 4–24 (FPWL…IFFV), 37–57 (YTIC…CYHF), 86–106 (GLSI…TLAA), 113–131 (SRLF…VGSF), 136–156 (LLLF…LLSM), 169–189 (FILY…GMGL), 210–230 (GLEI…SPII), 244–264 (HYST…YGLV), 274–294 (AHSI…IYAA), 307–327 (IAYS…SITD), 332–352 (GAIL…FLAG), 388–408 (LALP…GIIT), 418–438 (IVIS…SLSM), and 464–484 (LFVS…PDFV).

The protein belongs to the complex I subunit 4 family.

It is found in the plastid. The protein localises to the chloroplast thylakoid membrane. The enzyme catalyses a plastoquinone + NADH + (n+1) H(+)(in) = a plastoquinol + NAD(+) + n H(+)(out). It carries out the reaction a plastoquinone + NADPH + (n+1) H(+)(in) = a plastoquinol + NADP(+) + n H(+)(out). The polypeptide is NAD(P)H-quinone oxidoreductase chain 4, chloroplastic (Calycanthus floridus var. glaucus (Eastern sweetshrub)).